A 444-amino-acid polypeptide reads, in one-letter code: MNKMIPRVRFAPSPTGFLHVGGARTALFNWLYARHFKGTFILRIEDTDQSRNTPQALSVIFDNLSWLGLDWDEGPLPDGSSKGQFGPYFQSQRKEIYNEYCNRLIAKELAYIKDEAVYFRMPRKRIIVSDLICGDIYFDCSLEKDFVIRRKDGSFVFHLVNVVDDLEMQISHVIRGEDHLSNTPKHIALFEALGMSPPLYAHIPLILNPSGTKMSKRDKGSSVQEYIDEGFLPQAFRNYLCLLGWSLKENREIFGIEEAIAKFDLPQIHRSNARFNHQKLLWINGEYMRSLPLDELYPHAFFWLKKAGLIDQNTDCSFLKQAVGIVREKVKTGKELVEWMKPLLSDTLQYDEAVVQQYLDDKGKEILREALPYLEEVSSFQAKELEAIIKNLSLKMGRKTADYIHRLRVALTGRTVGPSLYPMLEVLGKQKVLNRLYKVVGPKE.

Positions 12–22 (PSPTGFLHVGG) match the 'HIGH' region motif. The short motif at 213–217 (KMSKR) is the 'KMSKS' region element. Residue Lys-216 participates in ATP binding.

It belongs to the class-I aminoacyl-tRNA synthetase family. Glutamate--tRNA ligase type 1 subfamily. In terms of assembly, monomer.

Its subcellular location is the cytoplasm. It carries out the reaction tRNA(Glu) + L-glutamate + ATP = L-glutamyl-tRNA(Glu) + AMP + diphosphate. Catalyzes the attachment of glutamate to tRNA(Glu) in a two-step reaction: glutamate is first activated by ATP to form Glu-AMP and then transferred to the acceptor end of tRNA(Glu). The chain is Glutamate--tRNA ligase from Methylacidiphilum infernorum (isolate V4) (Methylokorus infernorum (strain V4)).